A 262-amino-acid polypeptide reads, in one-letter code: Probable dihydroorotate dehydrogenase B (NAD(+)), electron transfer subunit (262 aa).

Positions 4–97 (VKPIPAEVVE…RGPYGKPFEV (94 aa)) constitute an FAD-binding FR-type domain. 4 residues coordinate [2Fe-2S] cluster: cysteine 217, cysteine 222, cysteine 225, and cysteine 234.

The protein belongs to the PyrK family. In terms of assembly, heterotetramer of 2 PyrK and 2 PyrD type B subunits. The cofactor is [2Fe-2S] cluster. FAD serves as cofactor.

The protein operates within pyrimidine metabolism; UMP biosynthesis via de novo pathway; orotate from (S)-dihydroorotate (NAD(+) route): step 1/1. In terms of biological role, responsible for channeling the electrons from the oxidation of dihydroorotate from the FMN redox center in the PyrD type B subunit to the ultimate electron acceptor NAD(+). In Methanopyrus kandleri (strain AV19 / DSM 6324 / JCM 9639 / NBRC 100938), this protein is Probable dihydroorotate dehydrogenase B (NAD(+)), electron transfer subunit.